A 313-amino-acid chain; its full sequence is Ribosomal RNA small subunit methyltransferase H (313 aa).

S-adenosyl-L-methionine-binding positions include 35-37, D55, F79, D101, and Q108; that span reads GGH.

Belongs to the methyltransferase superfamily. RsmH family.

The protein localises to the cytoplasm. The catalysed reaction is cytidine(1402) in 16S rRNA + S-adenosyl-L-methionine = N(4)-methylcytidine(1402) in 16S rRNA + S-adenosyl-L-homocysteine + H(+). Functionally, specifically methylates the N4 position of cytidine in position 1402 (C1402) of 16S rRNA. The protein is Ribosomal RNA small subunit methyltransferase H of Edwardsiella ictaluri (strain 93-146).